The sequence spans 603 residues: ATP-dependent zinc metalloprotease FtsH (603 aa).

The Stromal portion of the chain corresponds to 1 to 2 (MK). A helical transmembrane segment spans residues 3–23 (NLWIWSLPLIVLAFIGWQELA). Residues 24–101 (NQMPVATSRM…DVDVHAVSNW (78 aa)) lie on the Lumenal side of the membrane. The chain crosses the membrane as a helical span at residues 102–122 (INVASNWIIPLIIIGVVIWLL). The Stromal segment spans residues 123 to 603 (SRSASSNTTG…SQAARLTAVN (481 aa)). 194 to 201 (GPPGTGKT) contributes to the ATP binding site. H415 serves as a coordination point for Zn(2+). E416 is an active-site residue. Positions 419 and 493 each coordinate Zn(2+).

In the central section; belongs to the AAA ATPase family. This sequence in the C-terminal section; belongs to the peptidase M41 family. In terms of assembly, homohexamer. Zn(2+) is required as a cofactor.

The protein resides in the plastid. It is found in the chloroplast thylakoid membrane. Its function is as follows. Acts as a processive, ATP-dependent zinc metallopeptidase. The polypeptide is ATP-dependent zinc metalloprotease FtsH (Cyanidioschyzon merolae (strain NIES-3377 / 10D) (Unicellular red alga)).